Consider the following 492-residue polypeptide: JmjC domain-containing histone demethylation protein 1 (492 aa).

Residues 4–72 (PNICQHCQLK…SYRCPNHKEG (69 aa)) form a PHD-type; atypical zinc finger. The JmjC domain maps to 254–409 (TAVRQNDLVD…THLKIVEIEK (156 aa)). Thr-302 contributes to the substrate binding site. The Fe cation site is built by His-305 and Asp-307. Lys-322 contacts substrate. His-377 is a Fe cation binding site.

This sequence belongs to the JHDM1 histone demethylase family. The cofactor is Fe(2+).

Its subcellular location is the nucleus. The enzyme catalyses N(6),N(6)-dimethyl-L-lysyl(36)-[histone H3] + 2 2-oxoglutarate + 2 O2 = L-lysyl(36)-[histone H3] + 2 formaldehyde + 2 succinate + 2 CO2. Histone demethylase that specifically demethylates 'Lys-36' of histone H3, thereby playing a central role in histone code. Does not demethylate H3 'Lys-4' nor 'Lys-79'. This is JmjC domain-containing histone demethylation protein 1 (JHD1) from Saccharomyces cerevisiae (strain ATCC 204508 / S288c) (Baker's yeast).